Consider the following 320-residue polypeptide: Cilia- and flagella-associated protein 77 (320 aa).

The interval 1–27 is disordered; it reads MPEARSSGPDLTRWRKQQQPVRRTVSQ. Polar residues predominate over residues 17–27; the sequence is QQQPVRRTVSQ.

This sequence belongs to the CFAP77 family. Microtubule inner protein component of sperm flagellar doublet microtubules. Expressed in airway epithelial cells.

It is found in the cytoplasm. The protein localises to the cytoskeleton. Its subcellular location is the cilium axoneme. It localises to the flagellum axoneme. Functionally, microtubule inner protein (MIP) part of the dynein-decorated doublet microtubules (DMTs) in cilia axoneme, which is required for motile cilia beating. The sequence is that of Cilia- and flagella-associated protein 77 from Homo sapiens (Human).